Reading from the N-terminus, the 203-residue chain is Ribosomal RNA large subunit methyltransferase E (203 aa).

S-adenosyl-L-methionine is bound by residues glycine 51, tryptophan 53, aspartate 69, aspartate 85, and aspartate 109. The active-site Proton acceptor is lysine 149.

It belongs to the class I-like SAM-binding methyltransferase superfamily. RNA methyltransferase RlmE family.

Its subcellular location is the cytoplasm. It carries out the reaction uridine(2552) in 23S rRNA + S-adenosyl-L-methionine = 2'-O-methyluridine(2552) in 23S rRNA + S-adenosyl-L-homocysteine + H(+). Specifically methylates the uridine in position 2552 of 23S rRNA at the 2'-O position of the ribose in the fully assembled 50S ribosomal subunit. The polypeptide is Ribosomal RNA large subunit methyltransferase E (Methanoculleus marisnigri (strain ATCC 35101 / DSM 1498 / JR1)).